Consider the following 145-residue polypeptide: Ribosomal RNA large subunit methyltransferase H (145 aa).

S-adenosyl-L-methionine contacts are provided by residues Leu64, Gly93, and 112 to 117 (LSALTF).

It belongs to the RNA methyltransferase RlmH family. In terms of assembly, homodimer.

It localises to the cytoplasm. It carries out the reaction pseudouridine(1915) in 23S rRNA + S-adenosyl-L-methionine = N(3)-methylpseudouridine(1915) in 23S rRNA + S-adenosyl-L-homocysteine + H(+). Its function is as follows. Specifically methylates the pseudouridine at position 1915 (m3Psi1915) in 23S rRNA. The chain is Ribosomal RNA large subunit methyltransferase H from Prochlorococcus marinus (strain SARG / CCMP1375 / SS120).